The primary structure comprises 202 residues: Transmembrane 4 L6 family member 4 (202 aa).

At 1 to 9 (MCTGGCARC) the chain is on the cytoplasmic side. A helical transmembrane segment spans residues 10-30 (LGGTLIPLAVFGLLANILLFF). The Extracellular segment spans residues 31-48 (PGGKVVNDKSHLSDEVWY). Residues 49–69 (FGGILGSGVLMIFPALVFLGL) form a helical membrane-spanning segment. The Cytoplasmic portion of the chain corresponds to 70–93 (QNNDCCGCCGNEGCGKRFAMFTST). Residues 94–114 (LFAVIGFLGAGYSFIVSAVSI) form a helical membrane-spanning segment. The Extracellular portion of the chain corresponds to 115-158 (NKGPKCFMANGTWGYPFHDGDYLKDQALWSECEEPRDVVPWNLT). N-linked (GlcNAc...) asparagine glycosylation occurs at Asn156. Residues 159 to 179 (LFSILLVIGGIQMVLCAIQVI) form a helical membrane-spanning segment. The Cytoplasmic portion of the chain corresponds to 180–202 (NGLLGTLCGDCQCCGCCGGDGPV).

Belongs to the L6 tetraspanin family.

It is found in the membrane. Functionally, regulates the adhesive and proliferative status of intestinal epithelial cells. Can mediate density-dependent cell proliferation. This is Transmembrane 4 L6 family member 4 (Tm4sf4) from Mus musculus (Mouse).